Reading from the N-terminus, the 106-residue chain is Large ribosomal subunit protein uL23 (106 aa).

The protein belongs to the universal ribosomal protein uL23 family. As to quaternary structure, part of the 50S ribosomal subunit. Contacts protein L29, and trigger factor when it is bound to the ribosome.

Its function is as follows. One of the early assembly proteins it binds 23S rRNA. One of the proteins that surrounds the polypeptide exit tunnel on the outside of the ribosome. Forms the main docking site for trigger factor binding to the ribosome. The polypeptide is Large ribosomal subunit protein uL23 (Acinetobacter baylyi (strain ATCC 33305 / BD413 / ADP1)).